A 519-amino-acid chain; its full sequence is Putative cytochrome P450 CYP13A10 (519 aa).

A helical transmembrane segment spans residues 3-23; it reads VILLAIPTLFIGFISYYLWIW. Cys-465 provides a ligand contact to heme.

Belongs to the cytochrome P450 family. Requires heme as cofactor.

The protein localises to the membrane. Its function is as follows. Cytochromes P450 are a group of heme-thiolate monooxygenases. They oxidize a variety of structurally unrelated compounds, including steroids, fatty acids, and xenobiotics. The sequence is that of Putative cytochrome P450 CYP13A10 (cyp-13A10) from Caenorhabditis elegans.